The chain runs to 193 residues: Small ribosomal subunit protein uS7 (193 aa).

Belongs to the universal ribosomal protein uS7 family. In terms of assembly, part of the 30S ribosomal subunit.

Its function is as follows. One of the primary rRNA binding proteins, it binds directly to 16S rRNA where it nucleates assembly of the head domain of the 30S subunit. Is located at the subunit interface close to the decoding center. This chain is Small ribosomal subunit protein uS7, found in Saccharolobus solfataricus (strain ATCC 35092 / DSM 1617 / JCM 11322 / P2) (Sulfolobus solfataricus).